We begin with the raw amino-acid sequence, 234 residues long: Opacity protein opA65 (234 aa).

A signal peptide is located at residue Ala-1. A disordered region spans residues 154 to 179 (TVTPKPKNGTQGGPVKSTSPIPAYHE).

It belongs to the opacity porin family.

It is found in the cell outer membrane. Implicated in a number of adherence functions. OPA proteins are implicated in pathogenesis and are subject to phase variation. The polypeptide is Opacity protein opA65 (Neisseria gonorrhoeae).